The primary structure comprises 209 residues: Cerebral peptide 1 (209 aa).

Residues 1 to 20 (MLLAKISVVVLLLAIDGTSS) form the signal peptide. A compositionally biased stretch (polar residues) spans 21-39 (SESTDNVVLSSSPDSQKAA). Positions 21-43 (SESTDNVVLSSSPDSQKAATSRH) are cleaved as a propeptide — connecting peptide 1. The segment at 21-56 (SESTDNVVLSSSPDSQKAATSRHKRAPGWGKRSSLN) is disordered. Trp-49 is modified (tryptophan amide). The propeptide at 53–77 (SSLNDEDLFADSDSAQELLDSVAAL) is connecting peptide 2. Residues Trp-83 and Trp-105 each carry the tryptophan amide modification. Positions 98–169 (EAKRAPGWGK…APGWGKRSGG (72 aa)) are disordered. Residues 109–122 (GQEIDVDEDGSEQE) constitute a propeptide, connecting peptide 4. Tryptophan amide is present on residues Trp-128, Trp-135, Trp-142, Trp-149, Trp-156, and Trp-163. Positions 167-191 (SGGDYCETLEKMVDAYIYKAVEVDS) are cleaved as a propeptide — connecting peptide 5. An intrachain disulfide couples Cys-172 to Cys-197.

Homodimer; disulfide-linked. Cerebral peptide 1 is expressed in the cerebral, pedal and buccal ganglia and B1 and B2 neurons. APGW-amide is expressed in buccal ganglia and several neurons.

The protein localises to the secreted. May function as a peptide transmitter. In Aplysia californica (California sea hare), this protein is Cerebral peptide 1.